The chain runs to 206 residues: Small ribosomal subunit protein uS4 (206 aa).

Residues 98-176 (RRLDNVVYRL…APKWLEANRE (79 aa)) form the S4 RNA-binding domain.

It belongs to the universal ribosomal protein uS4 family. In terms of assembly, part of the 30S ribosomal subunit. Contacts protein S5. The interaction surface between S4 and S5 is involved in control of translational fidelity.

In terms of biological role, one of the primary rRNA binding proteins, it binds directly to 16S rRNA where it nucleates assembly of the body of the 30S subunit. With S5 and S12 plays an important role in translational accuracy. The sequence is that of Small ribosomal subunit protein uS4 from Gloeobacter violaceus (strain ATCC 29082 / PCC 7421).